A 419-amino-acid chain; its full sequence is UDP-N-acetylglucosamine 1-carboxyvinyltransferase (419 aa).

22–23 (KN) is a binding site for phosphoenolpyruvate. Residue R93 coordinates UDP-N-acetyl-alpha-D-glucosamine. The active-site Proton donor is C117. A 2-(S-cysteinyl)pyruvic acid O-phosphothioketal modification is found at C117. Residues 122–126 (RPVDQ), D305, and I327 contribute to the UDP-N-acetyl-alpha-D-glucosamine site.

It belongs to the EPSP synthase family. MurA subfamily.

The protein resides in the cytoplasm. The catalysed reaction is phosphoenolpyruvate + UDP-N-acetyl-alpha-D-glucosamine = UDP-N-acetyl-3-O-(1-carboxyvinyl)-alpha-D-glucosamine + phosphate. Its pathway is cell wall biogenesis; peptidoglycan biosynthesis. In terms of biological role, cell wall formation. Adds enolpyruvyl to UDP-N-acetylglucosamine. This chain is UDP-N-acetylglucosamine 1-carboxyvinyltransferase, found in Dichelobacter nodosus (strain VCS1703A).